A 449-amino-acid chain; its full sequence is Protein trichome birefringence-like 35 (449 aa).

Residues 12-29 traverse the membrane as a helical; Signal-anchor for type II membrane protein segment; sequence LPLAGLLFILVVTFMILF. The GDS motif motif lies at 185–187; sequence GDS. Residues 428–442 carry the DCXHWCLPGXXDXWN motif motif; sequence DCTHWCVPGVPDVWN.

It belongs to the PC-esterase family. TBL subfamily.

It localises to the membrane. Its function is as follows. May act as a bridging protein that binds pectin and other cell wall polysaccharides. Probably involved in maintaining esterification of pectins. May be involved in the specific O-acetylation of cell wall polymers. The protein is Protein trichome birefringence-like 35 (TBL35) of Arabidopsis thaliana (Mouse-ear cress).